The primary structure comprises 46 residues: MWRLWKLYDPRRVLIGIFSWLAVLALVIHFILLSTDRFNWVGGAAN.

Residues 1 to 12 lie on the Cytoplasmic side of the membrane; it reads MWRLWKLYDPRR. The helical transmembrane segment at 13–33 threads the bilayer; it reads VLIGIFSWLAVLALVIHFILL. H29 provides a ligand contact to a bacteriochlorophyll. Over 34 to 46 the chain is Periplasmic; it reads STDRFNWVGGAAN.

This sequence belongs to the antenna complex alpha subunit family. The core complex is formed by different alpha and beta chains, binding bacteriochlorophyll molecules, and arranged most probably in tetrameric structures disposed around the reaction center. The non-pigmented gamma chains may constitute additional components.

It is found in the cell inner membrane. Its function is as follows. Antenna complexes are light-harvesting systems, which transfer the excitation energy to the reaction centers. This is Light-harvesting protein B800/850/890 alpha-1 chain from Halorhodospira halophila (strain DSM 244 / SL1) (Ectothiorhodospira halophila (strain DSM 244 / SL1)).